Reading from the N-terminus, the 261-residue chain is Spermatogenesis-associated protein 46 (261 aa).

A disordered region spans residues 140 to 159 (SSSSSPENTCPREATKKSRH).

In terms of tissue distribution, testis-specific.

It is found in the nucleus membrane. In terms of biological role, plays a role in spermiogenesis and fertilization. This chain is Spermatogenesis-associated protein 46, found in Homo sapiens (Human).